The chain runs to 634 residues: Endoribonuclease rege-1 (634 aa).

Disordered regions lie at residues 1-33, 90-113, and 156-223; these read MDST…STPH, SHPS…APMI, and KMGL…NPDP. Residues 97 to 106 are compositionally biased toward basic and acidic residues; it reads ESSDPSKIDD. Low complexity-rich tracts occupy residues 182–194 and 201–217; these read SSAS…SSSS and SVSI…STPS. One can recognise an RNase NYN domain in the interval 225-377; the sequence is LRAVVVDGSN…PSGRHGPRIE (153 aa). Asp-314 serves as a coordination point for Mg(2+). The segment at 387–412 adopts a C3H1-type zinc-finger fold; the sequence is SSNPLVCPYARKCTYGNKCKFYHPER.

The protein belongs to the ZC3H12 family. Mg(2+) is required as a cofactor. In terms of tissue distribution, expressed in the intestinal cells adjacent to the pharynx.

The protein resides in the cytoplasm. Its function is as follows. Endonuclease which binds to the 3'UTR of target mRNAs and induces degradation of the transcript. Acts together with rle-1 to repress the expression of the transcription factor ets-4 by binding to the conserved ADE (alternate decay element) and RCE (REGE-1 cleavage element) stem loop structure in its 3'UTR, which controls the expression of genes in the IIS and TORC1 pathways, including those involved in lipid metabolism and autophagosome formation. May play a role in the clearance of apoptotic cell corpses. The polypeptide is Endoribonuclease rege-1 (Caenorhabditis elegans).